We begin with the raw amino-acid sequence, 727 residues long: Capsid protein VP1 (727 aa).

The span at 1–10 (MAPPAKRARR) shows a compositional bias: basic residues. Disordered regions lie at residues 1-38 (MAPP…SDAA), 95-120 (VLTD…PPPH), and 141-184 (LAPM…VGIS). The Nuclear localization signal motif lies at 4–13 (PAKRARRGLV). The interval 19–64 (YLGPGNSLDQGEPTNPSDAAAKEHDEAYAAYLRSGKNPYLYFSPAD) is phospholipase A2-like. The segment covering 25–35 (SLDQGEPTNPS) has biased composition (polar residues). Residues 166 to 183 (SGNGSGGGGGGGSGGVGI) show a composition bias toward gly residues. Asparagine 323 contacts Mg(2+). Cysteine 633 and cysteine 637 are disulfide-bonded.

It belongs to the parvoviridae capsid protein family. Interacts with host TFRC.

It localises to the virion. Its subcellular location is the host nucleus. In terms of biological role, capsid protein self-assembles to form an icosahedral capsid with a T=1 symmetry, about 22 nm in diameter, and consisting of 60 copies of two size variants of the capsid proteins, VP1 and VP2, which differ by the presence of an N-terminal extension in the minor protein VP1. The capsid encapsulates the genomic ssDNA. Capsid proteins are responsible for the attachment to host cell receptors. This attachment induces virion internalization predominantly through clathrin-dependent endocytosis. Binding to the host receptors also induces capsid rearrangements leading to surface exposure of VP1 N-terminus, specifically its phospholipase A2-like region and putative nuclear localization signal(s). VP1 N-terminus might serve as a lipolytic enzyme to breach the endosomal membrane during entry into host cell and might contribute to virus transport to the nucleus. The protein is Capsid protein VP1 of Feline panleukopenia virus (strain 193) (FPV).